The following is a 315-amino-acid chain: Polyprenyl transferase mpaA (315 aa).

A run of 8 helical transmembrane segments spans residues isoleucine 40–alanine 60, leucine 84–phenylalanine 103, isoleucine 118–leucine 135, valine 143–tryptophan 163, glycine 174–phenylalanine 194, leucine 224–isoleucine 244, tryptophan 248–phenylalanine 268, and isoleucine 279–glycine 299.

This sequence belongs to the UbiA prenyltransferase family. Requires Mg(2+) as cofactor.

It is found in the golgi apparatus membrane. It catalyses the reaction 5,7-dihydroxy-4-methylphthalide + (2E,6E)-farnesyl diphosphate = 4-farnesyl-3,5-dihydroxy-6-methylphthalide + diphosphate. The protein operates within secondary metabolite biosynthesis; terpenoid biosynthesis. Its function is as follows. Polyprenyl transferase; part of the gene cluster that mediates the biosynthesis of mycophenolic acid (MPA), the first isolated antibiotic natural product in the world obtained from a culture of Penicillium brevicompactum in 1893. MpaA is a Golgi apparatus-associated enzyme that catalyzes the prenylation of 5,7-dihydroxy-4,6-dimethylphthalide (DHMP) to yield farnesyl-DHMP (FDHMP). The first step of the pathway is the synthesis of 5-methylorsellinic acid (5MOA) by the cytosolic polyketide synthase mpaC. 5MOA is then converted to the phthalide compound 5,7-dihydroxy-4,6-dimethylphthalide (DHMP) by the endoplasmic reticulum-bound cytochrome P450 monooxygenase mpaDE. MpaDE first catalyzes hydroxylation of 5-MOA to 4,6-dihydroxy-2-(hydroxymethyl)-3-methylbenzoic acid (DHMB). MpaDE then acts as a lactone synthase that catalyzes the ring closure to convert DHMB into DHMP. The next step is the prenylation of DHMP by the Golgi apparatus-associated prenyltransferase mpaA to yield farnesyl-DHMP (FDHMP). The ER-bound oxygenase mpaB then mediates the oxidative cleavage the C19-C20 double bond in FDHMP to yield FDHMP-3C via a mycophenolic aldehyde intermediate. The O-methyltransferase mpaG catalyzes the methylation of FDHMP-3C to yield MFDHMP-3C. After the cytosolic methylation of FDHMP-3C, MFDHMP-3C enters into peroxisomes probably via free diffusion due to its low molecular weight. Upon a peroxisomal CoA ligation reaction, catalyzed by a beta-oxidation component enzyme acyl-CoA ligase ACL891, MFDHMP-3C-CoA would then be restricted to peroxisomes for the following beta-oxidation pathway steps. The peroxisomal beta-oxidation machinery than converts MFDHMP-3C-CoA into MPA_CoA, via a beta-oxidation chain-shortening process. Finally mpaH acts as a peroxisomal acyl-CoA hydrolase with high substrate specificity toward MPA-CoA to release the final product MPA. This Penicillium brevicompactum protein is Polyprenyl transferase mpaA.